We begin with the raw amino-acid sequence, 509 residues long: ATP synthase subunit alpha (509 aa).

Residue 169–176 (GDRQTGKT) participates in ATP binding.

This sequence belongs to the ATPase alpha/beta chains family. In terms of assembly, F-type ATPases have 2 components, CF(1) - the catalytic core - and CF(0) - the membrane proton channel. CF(1) has five subunits: alpha(3), beta(3), gamma(1), delta(1), epsilon(1). CF(0) has three main subunits: a(1), b(2) and c(9-12). The alpha and beta chains form an alternating ring which encloses part of the gamma chain. CF(1) is attached to CF(0) by a central stalk formed by the gamma and epsilon chains, while a peripheral stalk is formed by the delta and b chains.

The protein localises to the cell inner membrane. The catalysed reaction is ATP + H2O + 4 H(+)(in) = ADP + phosphate + 5 H(+)(out). Produces ATP from ADP in the presence of a proton gradient across the membrane. The alpha chain is a regulatory subunit. This is ATP synthase subunit alpha from Brucella suis biovar 1 (strain 1330).